The sequence spans 392 residues: Succinate--CoA ligase [ADP-forming] subunit beta (392 aa).

The ATP-grasp domain maps to 9-247 (KEILRVCGVP…LYEEDPKEIE (239 aa)). Residues K49, 56-58 (GRG), E102, Q105, and E110 each bind ATP. Residues N202 and D216 each contribute to the Mg(2+) site. Residues N267 and 324 to 326 (GIM) each bind substrate.

It belongs to the succinate/malate CoA ligase beta subunit family. As to quaternary structure, heterotetramer of two alpha and two beta subunits. Mg(2+) serves as cofactor.

The catalysed reaction is succinate + ATP + CoA = succinyl-CoA + ADP + phosphate. It catalyses the reaction GTP + succinate + CoA = succinyl-CoA + GDP + phosphate. The protein operates within carbohydrate metabolism; tricarboxylic acid cycle; succinate from succinyl-CoA (ligase route): step 1/1. In terms of biological role, succinyl-CoA synthetase functions in the citric acid cycle (TCA), coupling the hydrolysis of succinyl-CoA to the synthesis of either ATP or GTP and thus represents the only step of substrate-level phosphorylation in the TCA. The beta subunit provides nucleotide specificity of the enzyme and binds the substrate succinate, while the binding sites for coenzyme A and phosphate are found in the alpha subunit. This Neorickettsia sennetsu (strain ATCC VR-367 / Miyayama) (Ehrlichia sennetsu) protein is Succinate--CoA ligase [ADP-forming] subunit beta.